Reading from the N-terminus, the 367-residue chain is tRNA-specific 2-thiouridylase MnmA (367 aa).

ATP-binding positions include glycine 11–serine 18 and leucine 37. Cysteine 99 functions as the Nucleophile in the catalytic mechanism. A disulfide bridge connects residues cysteine 99 and cysteine 195. Glycine 123 provides a ligand contact to ATP. The tract at residues lysine 145–glutamine 147 is interaction with tRNA. The active-site Cysteine persulfide intermediate is cysteine 195. Residues arginine 304–tyrosine 305 are interaction with tRNA.

Belongs to the MnmA/TRMU family.

It localises to the cytoplasm. It catalyses the reaction S-sulfanyl-L-cysteinyl-[protein] + uridine(34) in tRNA + AH2 + ATP = 2-thiouridine(34) in tRNA + L-cysteinyl-[protein] + A + AMP + diphosphate + H(+). In terms of biological role, catalyzes the 2-thiolation of uridine at the wobble position (U34) of tRNA, leading to the formation of s(2)U34. This Chlorobium luteolum (strain DSM 273 / BCRC 81028 / 2530) (Pelodictyon luteolum) protein is tRNA-specific 2-thiouridylase MnmA.